Here is a 98-residue protein sequence, read N- to C-terminus: Aspartyl/glutamyl-tRNA(Asn/Gln) amidotransferase subunit C (98 aa).

The disordered stretch occupies residues 76–98; that stretch reads QVLSGAPDAEDGRFKVPAILEED.

Belongs to the GatC family. In terms of assembly, heterotrimer of A, B and C subunits.

It catalyses the reaction L-glutamyl-tRNA(Gln) + L-glutamine + ATP + H2O = L-glutaminyl-tRNA(Gln) + L-glutamate + ADP + phosphate + H(+). The enzyme catalyses L-aspartyl-tRNA(Asn) + L-glutamine + ATP + H2O = L-asparaginyl-tRNA(Asn) + L-glutamate + ADP + phosphate + 2 H(+). In terms of biological role, allows the formation of correctly charged Asn-tRNA(Asn) or Gln-tRNA(Gln) through the transamidation of misacylated Asp-tRNA(Asn) or Glu-tRNA(Gln) in organisms which lack either or both of asparaginyl-tRNA or glutaminyl-tRNA synthetases. The reaction takes place in the presence of glutamine and ATP through an activated phospho-Asp-tRNA(Asn) or phospho-Glu-tRNA(Gln). The polypeptide is Aspartyl/glutamyl-tRNA(Asn/Gln) amidotransferase subunit C (Renibacterium salmoninarum (strain ATCC 33209 / DSM 20767 / JCM 11484 / NBRC 15589 / NCIMB 2235)).